Here is a 103-residue protein sequence, read N- to C-terminus: ATP synthase F(0) complex subunit g, mitochondrial (103 aa).

Residue Ala2 is modified to N-acetylalanine. N6-acetyllysine occurs at positions 11, 24, 35, and 54.

Belongs to the ATPase g subunit family. As to quaternary structure, component of the ATP synthase complex composed at least of ATP5F1A/subunit alpha, ATP5F1B/subunit beta, ATP5MC1/subunit c (homooctomer), MT-ATP6/subunit a, MT-ATP8/subunit 8, ATP5ME/subunit e, ATP5MF/subunit f, ATP5MG/subunit g, ATP5MK/subunit k, ATP5MJ/subunit j, ATP5F1C/subunit gamma, ATP5F1D/subunit delta, ATP5F1E/subunit epsilon, ATP5PF/subunit F6, ATP5PB/subunit b, ATP5PD/subunit d, ATP5PO/subunit OSCP. ATP synthase complex consists of a soluble F(1) head domain (subunits alpha(3) and beta(3)) - the catalytic core - and a membrane F(0) domain - the membrane proton channel (subunits c, a, 8, e, f, g, k and j). These two domains are linked by a central stalk (subunits gamma, delta, and epsilon) rotating inside the F1 region and a stationary peripheral stalk (subunits F6, b, d, and OSCP).

It is found in the mitochondrion. Its subcellular location is the mitochondrion inner membrane. Functionally, subunit g, of the mitochondrial membrane ATP synthase complex (F(1)F(0) ATP synthase or Complex V) that produces ATP from ADP in the presence of a proton gradient across the membrane which is generated by electron transport complexes of the respiratory chain. ATP synthase complex consist of a soluble F(1) head domain - the catalytic core - and a membrane F(1) domain - the membrane proton channel. These two domains are linked by a central stalk rotating inside the F(1) region and a stationary peripheral stalk. During catalysis, ATP synthesis in the catalytic domain of F(1) is coupled via a rotary mechanism of the central stalk subunits to proton translocation. In vivo, can only synthesize ATP although its ATP hydrolase activity can be activated artificially in vitro. Part of the complex F(0) domain. This chain is ATP synthase F(0) complex subunit g, mitochondrial, found in Pongo abelii (Sumatran orangutan).